We begin with the raw amino-acid sequence, 464 residues long: tRNA-2-methylthio-N(6)-dimethylallyladenosine synthase (464 aa).

In terms of domain architecture, MTTase N-terminal spans 19–135; the sequence is GSYWITTFGC…LENLLERVDS (117 aa). C28, C64, C98, C170, C174, and C177 together coordinate [4Fe-4S] cluster. One can recognise a Radical SAM core domain in the interval 156 to 393; the sequence is RDSTICGWVN…NELVEATSRK (238 aa). Positions 396 to 464 constitute a TRAM domain; it reads QRYLNNTESV…SFSLSGQIYK (69 aa).

It belongs to the methylthiotransferase family. MiaB subfamily. Monomer. [4Fe-4S] cluster is required as a cofactor.

The protein resides in the cytoplasm. It carries out the reaction N(6)-dimethylallyladenosine(37) in tRNA + (sulfur carrier)-SH + AH2 + 2 S-adenosyl-L-methionine = 2-methylsulfanyl-N(6)-dimethylallyladenosine(37) in tRNA + (sulfur carrier)-H + 5'-deoxyadenosine + L-methionine + A + S-adenosyl-L-homocysteine + 2 H(+). Functionally, catalyzes the methylthiolation of N6-(dimethylallyl)adenosine (i(6)A), leading to the formation of 2-methylthio-N6-(dimethylallyl)adenosine (ms(2)i(6)A) at position 37 in tRNAs that read codons beginning with uridine. The sequence is that of tRNA-2-methylthio-N(6)-dimethylallyladenosine synthase from Prochlorococcus marinus (strain MIT 9515).